Consider the following 360-residue polypeptide: Peptide chain release factor 1 (360 aa).

The residue at position 237 (Q237) is an N5-methylglutamine.

This sequence belongs to the prokaryotic/mitochondrial release factor family. Post-translationally, methylated by PrmC. Methylation increases the termination efficiency of RF1.

Its subcellular location is the cytoplasm. Peptide chain release factor 1 directs the termination of translation in response to the peptide chain termination codons UAG and UAA. The protein is Peptide chain release factor 1 of Nitrosococcus oceani (strain ATCC 19707 / BCRC 17464 / JCM 30415 / NCIMB 11848 / C-107).